The chain runs to 274 residues: Cytochrome b-c1 complex subunit Rieske, mitochondrial (274 aa).

Residues 79-103 (SHTDVKVPDFSEYRRPEVLDSTKSS) lie on the Mitochondrial matrix side of the membrane. A helical transmembrane segment spans residues 104–140 (RESSEARKGFSYLVTAVTTVGVAYAAKNAVTQFVSSM). Residues 141–274 (SASADVLALA…FTSDDMVIVG (134 aa)) are Mitochondrial intermembrane-facing. Residues 187 to 272 (EAAVELSQLR…YEFTSDDMVI (86 aa)) form the Rieske domain. Residues C217, H219, C236, H239, and S241 each coordinate [2Fe-2S] cluster. C222 and C238 form a disulfide bridge.

It belongs to the Rieske iron-sulfur protein family. In terms of assembly, component of the ubiquinol-cytochrome c oxidoreductase (cytochrome b-c1 complex, complex III, CIII), a multisubunit enzyme composed of 11 subunits. The complex is composed of 3 respiratory subunits cytochrome b, cytochrome c1 and Rieske protein UQCRFS1, 2 core protein subunits UQCRC1/QCR1 and UQCRC2/QCR2, and 6 low-molecular weight protein subunits UQCRH/QCR6, UQCRB/QCR7, UQCRQ/QCR8, UQCR10/QCR9, UQCR11/QCR10 and subunit 9, the cleavage product of Rieske protein UQCRFS1. The complex exists as an obligatory dimer and forms supercomplexes (SCs) in the inner mitochondrial membrane with NADH-ubiquinone oxidoreductase (complex I, CI) and cytochrome c oxidase (complex IV, CIV), resulting in different assemblies (supercomplex SCI(1)III(2)IV(1) and megacomplex MCI(2)III(2)IV(2)). Incorporation of the Rieske protein UQCRFS1 is the penultimate step in complex III assembly. Interacts with TTC19, which is involved in the clearance of UQCRFS1 fragments. As to quaternary structure, component of the ubiquinol-cytochrome c oxidoreductase (cytochrome b-c1 complex, complex III, CIII). Subunit 9 corresponds to the mitochondrial targeting sequence (MTS) of Rieske protein UQCRFS1. It is retained after processing and incorporated inside complex III, where it remains bound to the complex and localizes between the 2 core subunits UQCRC1/QCR1 and UQCRC2/QCR2. Requires [2Fe-2S] cluster as cofactor. Post-translationally, proteolytic processing is necessary for the correct insertion of UQCRFS1 in the complex III dimer. Several fragments are generated during UQCRFS1 insertion, most probably due to the endogenous matrix-processing peptidase (MPP) activity of the 2 core protein subunits UQCRC1/QCR1 and UQCRC2/QCR2, which are homologous to the 2 mitochondrial-processing peptidase (MPP) subunits beta-MPP and alpha-MPP respectively. The action of the protease is also necessary for the clearance of the UQCRFS1 fragments.

It localises to the mitochondrion inner membrane. The catalysed reaction is a quinol + 2 Fe(III)-[cytochrome c](out) = a quinone + 2 Fe(II)-[cytochrome c](out) + 2 H(+)(out). Its function is as follows. Component of the ubiquinol-cytochrome c oxidoreductase, a multisubunit transmembrane complex that is part of the mitochondrial electron transport chain which drives oxidative phosphorylation. The respiratory chain contains 3 multisubunit complexes succinate dehydrogenase (complex II, CII), ubiquinol-cytochrome c oxidoreductase (cytochrome b-c1 complex, complex III, CIII) and cytochrome c oxidase (complex IV, CIV), that cooperate to transfer electrons derived from NADH and succinate to molecular oxygen, creating an electrochemical gradient over the inner membrane that drives transmembrane transport and the ATP synthase. The cytochrome b-c1 complex catalyzes electron transfer from ubiquinol to cytochrome c, linking this redox reaction to translocation of protons across the mitochondrial inner membrane, with protons being carried across the membrane as hydrogens on the quinol. In the process called Q cycle, 2 protons are consumed from the matrix, 4 protons are released into the intermembrane space and 2 electrons are passed to cytochrome c. The Rieske protein is a catalytic core subunit containing a [2Fe-2S] iron-sulfur cluster. It cycles between 2 conformational states during catalysis to transfer electrons from the quinol bound in the Q(0) site in cytochrome b to cytochrome c1. Incorporation of UQCRFS1 is the penultimate step in complex III assembly. Component of the ubiquinol-cytochrome c oxidoreductase (cytochrome b-c1 complex, complex III, CIII). UQCRFS1 undergoes proteolytic processing once it is incorporated in the complex III dimer. One of the fragments, called subunit 9, corresponds to its mitochondrial targeting sequence (MTS). The proteolytic processing is necessary for the correct insertion of UQCRFS1 in the complex III dimer, but the persistence of UQCRFS1-derived fragments may prevent newly imported UQCRFS1 to be processed and assembled into complex III and is detrimental for the complex III structure and function. The protein is Cytochrome b-c1 complex subunit Rieske, mitochondrial (UQCRFS1) of Symphalangus syndactylus (Siamang).